The chain runs to 383 residues: Chaperone protein DnaJ (383 aa).

The 65-residue stretch at 4–68 (DLYETLNVSR…DQRARYDRFG (65 aa)) folds into the J domain. Residues 139–221 (GGEKEITINH…CSGRGRNQKQ (83 aa)) form a CR-type zinc finger. Zn(2+) is bound by residues Cys152, Cys155, Cys169, Cys172, Cys195, Cys198, Cys209, and Cys212. 4 CXXCXGXG motif repeats span residues 152–159 (CETCRGSG), 169–176 (CRNCGGQG), 195–202 (CPNCQGTG), and 209–216 (CPTCSGRG).

It belongs to the DnaJ family. In terms of assembly, homodimer. It depends on Zn(2+) as a cofactor.

The protein resides in the cytoplasm. In terms of biological role, participates actively in the response to hyperosmotic and heat shock by preventing the aggregation of stress-denatured proteins and by disaggregating proteins, also in an autonomous, DnaK-independent fashion. Unfolded proteins bind initially to DnaJ; upon interaction with the DnaJ-bound protein, DnaK hydrolyzes its bound ATP, resulting in the formation of a stable complex. GrpE releases ADP from DnaK; ATP binding to DnaK triggers the release of the substrate protein, thus completing the reaction cycle. Several rounds of ATP-dependent interactions between DnaJ, DnaK and GrpE are required for fully efficient folding. Also involved, together with DnaK and GrpE, in the DNA replication of plasmids through activation of initiation proteins. The sequence is that of Chaperone protein DnaJ from Gloeobacter violaceus (strain ATCC 29082 / PCC 7421).